A 204-amino-acid chain; its full sequence is MSTYLQSSEGKFIPATKRPDGTWRKARRVKDGYVPQEEVPLYESKGKQFVAQRQAGVPPGMCPLVAAESKKEREKQERTRAKKQEKESGRQPKAPAPGVLVMPPSTCPPPKVSQQQQQQPSGSRDINSISKAMEDTLKLDAPQEVVDPAKQLKKLRKKIREIEQIESRIQAGEQKKLDKDQLDKVKKKSEILRQIKDLESTPRS.

Disordered regions lie at residues 1–27 (MSTYLQSSEGKFIPATKRPDGTWRKAR) and 52–142 (QRQA…LDAP). The segment covering 68–90 (ESKKEREKQERTRAKKQEKESGR) has biased composition (basic and acidic residues). A compositionally biased stretch (polar residues) spans 120 to 130 (PSGSRDINSIS). Residues 149–181 (AKQLKKLRKKIREIEQIESRIQAGEQKKLDKDQ) are a coiled coil.

This sequence belongs to the pym family. Interacts (via N-terminus) with mago and tsu/Y14; the interaction is direct.

Its subcellular location is the cytoplasm. The protein localises to the nucleus. Its function is as follows. Regulator of the exon junction complex (EJC), a multiprotein complex that associates immediately upstream of the exon-exon junction on mRNAs and serves as a positional landmarks for the intron exon structure of genes and directs post-transcriptional processes in the cytoplasm such as mRNA export, nonsense-mediated mRNA decay (NMD) or translation. This chain is Partner of Y14 and mago, found in Drosophila simulans (Fruit fly).